A 406-amino-acid chain; its full sequence is Tryptophan synthase beta chain (406 aa).

Lys99 is modified (N6-(pyridoxal phosphate)lysine).

It belongs to the TrpB family. In terms of assembly, tetramer of two alpha and two beta chains. The cofactor is pyridoxal 5'-phosphate.

It catalyses the reaction (1S,2R)-1-C-(indol-3-yl)glycerol 3-phosphate + L-serine = D-glyceraldehyde 3-phosphate + L-tryptophan + H2O. It functions in the pathway amino-acid biosynthesis; L-tryptophan biosynthesis; L-tryptophan from chorismate: step 5/5. The beta subunit is responsible for the synthesis of L-tryptophan from indole and L-serine. The sequence is that of Tryptophan synthase beta chain from Rhizobium meliloti (strain 1021) (Ensifer meliloti).